The primary structure comprises 744 residues: Sorting nexin MVP1 (744 aa).

Disordered stretches follow at residues 1 to 40, 218 to 252, and 273 to 299; these read MNSN…ATTT, NRSI…GGGG, and SRSV…GSGT. Composition is skewed to polar residues over residues 26–40 and 218–243; these read TSIN…ATTT and NRSI…STTI. Over residues 283-297 the composition is skewed to gly residues; that stretch reads QGGGGGSGGGSGSGS. Positions 326-444 constitute a PX domain; sequence GIDLIKIKEV…SFLTVPTDLT (119 aa). Residues arginine 369, serine 371, lysine 395, and arginine 410 each contribute to the a 1,2-diacyl-sn-glycero-3-phospho-(1D-myo-inositol-3-phosphate) site.

It belongs to the sorting nexin family.

It localises to the cytoplasm. The protein localises to the membrane. Required for vacuolar protein sorting. The polypeptide is Sorting nexin MVP1 (MVP1) (Candida albicans (strain SC5314 / ATCC MYA-2876) (Yeast)).